The chain runs to 264 residues: Glutamate 5-kinase (264 aa).

Lys15 serves as a coordination point for ATP. Substrate contacts are provided by Ser55, Asp142, and Asn154. Residues Ser174–Asp175 and Thr216–Lys222 contribute to the ATP site.

This sequence belongs to the glutamate 5-kinase family.

The protein localises to the cytoplasm. The catalysed reaction is L-glutamate + ATP = L-glutamyl 5-phosphate + ADP. It functions in the pathway amino-acid biosynthesis; L-proline biosynthesis; L-glutamate 5-semialdehyde from L-glutamate: step 1/2. Its function is as follows. Catalyzes the transfer of a phosphate group to glutamate to form L-glutamate 5-phosphate. The polypeptide is Glutamate 5-kinase (Alkaliphilus metalliredigens (strain QYMF)).